The chain runs to 266 residues: Thymidylate synthase (266 aa).

Residue Arg-24 coordinates dUMP. His-54 contributes to the (6R)-5,10-methylene-5,6,7,8-tetrahydrofolate binding site. Residue 129 to 130 (RR) participates in dUMP binding. Cys-149 (nucleophile) is an active-site residue. DUMP is bound by residues 169–172 (RSAD), Asn-180, and 210–212 (HIY). Asp-172 contributes to the (6R)-5,10-methylene-5,6,7,8-tetrahydrofolate binding site. Position 265 (Ala-265) interacts with (6R)-5,10-methylene-5,6,7,8-tetrahydrofolate.

Belongs to the thymidylate synthase family. Bacterial-type ThyA subfamily. In terms of assembly, homodimer.

The protein localises to the cytoplasm. The enzyme catalyses dUMP + (6R)-5,10-methylene-5,6,7,8-tetrahydrofolate = 7,8-dihydrofolate + dTMP. The protein operates within pyrimidine metabolism; dTTP biosynthesis. Its function is as follows. Catalyzes the reductive methylation of 2'-deoxyuridine-5'-monophosphate (dUMP) to 2'-deoxythymidine-5'-monophosphate (dTMP) while utilizing 5,10-methylenetetrahydrofolate (mTHF) as the methyl donor and reductant in the reaction, yielding dihydrofolate (DHF) as a by-product. This enzymatic reaction provides an intracellular de novo source of dTMP, an essential precursor for DNA biosynthesis. This chain is Thymidylate synthase, found in Nocardia farcinica (strain IFM 10152).